Here is a 122-residue protein sequence, read N- to C-terminus: uncharacterized protein (122 aa).

A helical transmembrane segment spans residues 93-113 (ILRICIVFLSLKIYTLTLVII).

The protein resides in the membrane. This is an uncharacterized protein from Saccharomyces cerevisiae (strain ATCC 204508 / S288c) (Baker's yeast).